A 663-amino-acid chain; its full sequence is DNA topoisomerase 1 (663 aa).

In terms of domain architecture, Toprim spans 4–137 (SWLIITEKDN…TVKVDRVRYS (134 aa)). 2 residues coordinate Mg(2+): E10 and D106. Residues 155-558 (DFNLANAALA…ESREMLLQIL (404 aa)) enclose the Topo IA-type catalytic domain. Residues 193–198 (SVGRVQ) form an interaction with DNA region. The O-(5'-phospho-DNA)-tyrosine intermediate role is filled by Y306. The C4-type 1 zinc-finger motif lies at 583-610 (CPECGGELVVRQSKAGKRFIGCSNYPDC). Residues 629–653 (CKEHEIKEVKIRTKKGYWNLGCPYC) form a C4-type 2; atypical zinc finger.

This sequence belongs to the type IA topoisomerase family. In terms of assembly, monomer. Mg(2+) is required as a cofactor.

It catalyses the reaction ATP-independent breakage of single-stranded DNA, followed by passage and rejoining.. In terms of biological role, releases the supercoiling and torsional tension of DNA, which is introduced during the DNA replication and transcription, by transiently cleaving and rejoining one strand of the DNA duplex. Introduces a single-strand break via transesterification at a target site in duplex DNA. The scissile phosphodiester is attacked by the catalytic tyrosine of the enzyme, resulting in the formation of a DNA-(5'-phosphotyrosyl)-enzyme intermediate and the expulsion of a 3'-OH DNA strand. The free DNA strand then undergoes passage around the unbroken strand, thus removing DNA supercoils. Finally, in the religation step, the DNA 3'-OH attacks the covalent intermediate to expel the active-site tyrosine and restore the DNA phosphodiester backbone. This chain is DNA topoisomerase 1, found in Archaeoglobus fulgidus (strain ATCC 49558 / DSM 4304 / JCM 9628 / NBRC 100126 / VC-16).